The primary structure comprises 697 residues: Potassium-transporting ATPase ATP-binding subunit (697 aa).

4 helical membrane passes run 55–75 (PIMF…FLPS), 79–99 (SIPG…VLFA), 245–265 (LTLI…YLGF), and 271–291 (VLVA…LSAI). Asp324 functions as the 4-aspartylphosphate intermediate in the catalytic mechanism. Residues Asp361, Glu365, 393–400 (FKAETRMS), and Lys412 contribute to the ATP site. 2 residues coordinate Mg(2+): Asp535 and Asp539. 3 consecutive transmembrane segments (helical) span residues 605-625 (FAII…LNIM), 633-653 (AILS…PLAM), and 677-697 (GGVI…GLFI).

The protein belongs to the cation transport ATPase (P-type) (TC 3.A.3) family. Type IA subfamily. As to quaternary structure, the system is composed of three essential subunits: KdpA, KdpB and KdpC.

It is found in the cell membrane. The enzyme catalyses K(+)(out) + ATP + H2O = K(+)(in) + ADP + phosphate + H(+). Part of the high-affinity ATP-driven potassium transport (or Kdp) system, which catalyzes the hydrolysis of ATP coupled with the electrogenic transport of potassium into the cytoplasm. This subunit is responsible for energy coupling to the transport system and for the release of the potassium ions to the cytoplasm. The polypeptide is Potassium-transporting ATPase ATP-binding subunit (Bacillus cereus (strain G9842)).